A 198-amino-acid chain; its full sequence is Charged multivesicular body protein 1a (198 aa).

Coiled-coil stretches lie at residues 7–41 and 176–198; these read QLKF…QQKN and GETS…ALRN. The segment at 171–198 is disordered; sequence GASALGETSARAQEKEDQLSRRLAALRN. Positions 187–197 match the MIT-interacting motif motif; it reads DQLSRRLAALR.

Belongs to the SNF7 family. In terms of assembly, probable peripherally associated component of the endosomal sorting required for transport complex III (ESCRT-III).

It is found in the cytoplasm. It localises to the endosome membrane. Functionally, probable peripherally associated component of the endosomal sorting required for transport complex III (ESCRT-III) which is involved in multivesicular bodies (MVBs) formation and sorting of endosomal cargo proteins into MVBs. MVBs contain intraluminal vesicles (ILVs) that are generated by invagination and scission from the limiting membrane of the endosome and mostly are delivered to lysosomes enabling degradation of membrane proteins, such as stimulated growth factor receptors, lysosomal enzymes and lipids. This chain is Charged multivesicular body protein 1a (chmp1a), found in Danio rerio (Zebrafish).